A 325-amino-acid chain; its full sequence is Elongation factor P--(R)-beta-lysine ligase (325 aa).

76–78 (SPE) contributes to the substrate binding site. Residues 100–102 (RNE) and N109 contribute to the ATP site. Y118 is a binding site for substrate. Position 244-245 (244-245 (EL)) interacts with ATP. E251 serves as a coordination point for substrate. G300 serves as a coordination point for ATP.

This sequence belongs to the class-II aminoacyl-tRNA synthetase family. EpmA subfamily. As to quaternary structure, homodimer.

It catalyses the reaction D-beta-lysine + L-lysyl-[protein] + ATP = N(6)-((3R)-3,6-diaminohexanoyl)-L-lysyl-[protein] + AMP + diphosphate + H(+). In terms of biological role, with EpmB is involved in the beta-lysylation step of the post-translational modification of translation elongation factor P (EF-P) on 'Lys-34'. Catalyzes the ATP-dependent activation of (R)-beta-lysine produced by EpmB, forming a lysyl-adenylate, from which the beta-lysyl moiety is then transferred to the epsilon-amino group of EF-P 'Lys-34'. The polypeptide is Elongation factor P--(R)-beta-lysine ligase (Salmonella choleraesuis (strain SC-B67)).